The sequence spans 293 residues: Putative metal ABC transporter substrate-binding protein Hpf (293 aa).

The signal sequence occupies residues 1–22; that stretch reads MRNSFKIMTALALGLFAMQANA. The interval 23–48 is interaction with host components; sequence KFKVVTTFTVIQDIAQNVAGNAATVE. 4 residues coordinate a divalent metal cation: His58, His123, Glu189, and Asp264.

The protein belongs to the bacterial solute-binding protein 9 family. In terms of assembly, interacts with host laminin and vitronectin. Can interact with both immobilized and soluble vitronectin.

It is found in the cell outer membrane. The protein localises to the cell surface. It localises to the periplasm. Its function is as follows. Part of an ATP-binding cassette (ABC) transport system involved in metal import. Binds a metal with high affinity and specificity and delivers it to the membrane permease for translocation into the cytoplasm. Acts as an adhesin that promotes binding of H.influenzae to host laminin and vitronectin. In addition, interaction with serum vitronectin plays an important role in bacterial serum resistance. The chain is Putative metal ABC transporter substrate-binding protein Hpf (hpf) from Haemophilus influenzae (strain NTHi 3655).